The chain runs to 398 residues: Unsaturated chondroitin disaccharide hydrolase (398 aa).

The active-site Nucleophile is D115. Substrate is bound by residues D115, D175, G233, T235, R247, W251, S365, and S368. D175 acts as the Proton donor in catalysis.

This sequence belongs to the glycosyl hydrolase 88 family. Monomer.

The enzyme catalyses beta-D-4-deoxy-Delta(4)-GlcpA-(1-&gt;3)-beta-D-GalpNAc6S + H2O = N-acetyl-beta-D-galactosamine 6-sulfate + 5-dehydro-4-deoxy-D-glucuronate. Its function is as follows. Catalyzes the hydrolysis of unsaturated hyaluronate and chondroitin disaccharides. Also degrades unsaturated heparin disaccharides. Releases 4-deoxy-4,5-didehydro D-glucuronic acid or 4-deoxy-4,5-didehydro L-iduronic acid from chondroitin disaccharides, hyaluronan disaccharides and heparin disaccharides and cleaves both glycosidic (1-&gt;3) and (1-&gt;4) bonds. Prefers sulfated glycosaminoglycans compared to unsulfated glycosaminoglycans. Probably required for mammalian cells invasion through the degradation of extracellular sulfated glycosaminoglycans such as chondroitin and hyaluronan. This chain is Unsaturated chondroitin disaccharide hydrolase, found in Streptococcus agalactiae serotype III (strain NEM316).